The primary structure comprises 728 residues: Procollagen-lysine,2-oxoglutarate 5-dioxygenase 1 (728 aa).

The first 18 residues, M1–A18, serve as a signal peptide directing secretion. 3 N-linked (GlcNAc...) asparagine glycosylation sites follow: N177, N198, and N539. The Fe2OG dioxygenase domain occupies Q637–P728. Fe cation is bound by residues H657 and D659. N-linked (GlcNAc...) asparagine glycosylation occurs at N687. H709 is a binding site for Fe cation. The active site involves R719.

Homodimer. Identified in a complex with P3H3 and P3H4. The cofactor is Fe(2+). It depends on L-ascorbate as a cofactor.

It localises to the rough endoplasmic reticulum membrane. It carries out the reaction L-lysyl-[collagen] + 2-oxoglutarate + O2 = (5R)-5-hydroxy-L-lysyl-[collagen] + succinate + CO2. Functionally, part of a complex composed of PLOD1, P3H3 and P3H4 that catalyzes hydroxylation of lysine residues in collagen alpha chains and is required for normal assembly and cross-linkling of collagen fibrils. Forms hydroxylysine residues in -Xaa-Lys-Gly- sequences in collagens. These hydroxylysines serve as sites of attachment for carbohydrate units and are essential for the stability of the intermolecular collagen cross-links. This is Procollagen-lysine,2-oxoglutarate 5-dioxygenase 1 (Plod1) from Rattus norvegicus (Rat).